The chain runs to 78 residues: Large ribosomal subunit protein bL28 (78 aa).

A disordered region spans residues 1-21; sequence MSRVCQVTGKKPMVGNNRSHA.

It belongs to the bacterial ribosomal protein bL28 family.

This chain is Large ribosomal subunit protein bL28, found in Shewanella loihica (strain ATCC BAA-1088 / PV-4).